The primary structure comprises 241 residues: Tumor necrosis factor ligand superfamily member 13 (241 aa).

Positions 1 to 95 (MPASSPGHMG…KDGAKSRRRR (95 aa)) are excised as a propeptide. The THD domain maps to 107-241 (SVLHLVPVNI…HGTFLGFVKL (135 aa)). N-linked (GlcNAc...) asparagine glycosylation is present at N115. A disulfide bridge links C187 with C202.

Belongs to the tumor necrosis factor family. As to quaternary structure, homotrimer. In terms of processing, the soluble form derives from the membrane form by proteolytic processing.

The protein resides in the secreted. In terms of biological role, cytokine that binds to TNFRSF13B/TACI and to TNFRSF17/BCMA. Plays a role in the regulation of tumor cell growth. May be involved in monocyte/macrophage-mediated immunological processes. This Mus musculus (Mouse) protein is Tumor necrosis factor ligand superfamily member 13 (Tnfsf13).